The following is a 488-amino-acid chain: Monothiol glutaredoxin-S17 (488 aa).

The region spanning 2 to 107 is the Thioredoxin domain; the sequence is SGTVKDIVSK…LANKVGKVAG (106 aa). Glutaredoxin domains follow at residues 154–256, 284–386, and 391–488; these read KSRL…GITT, RARL…GITG, and EDRL…TLSE. K408 serves as a coordination point for glutathione. A [2Fe-2S] cluster-binding site is contributed by C416. Residues R445, F457, and 470 to 471 contribute to the glutathione site; that span reads CD.

The protein belongs to the glutaredoxin family. CGFS subfamily. As to quaternary structure, [2Fe-2S]-bridged holo-homodimer. Interacts in vitro with SUFE1, BOLA1, BOLA2 and BOLA4. Interacts in vivo only with BOLA2. Interacts with RGLG3 and RGLG4. Ubiquitinated at Lys-154. Polyubiquitinated by RGLG3 and RGLG4. Polyubiquitination of GRXS17 leads to its degradation by the proteasome.

It is found in the cytoplasm. May only reduce GSH-thiol disulfides, but not protein disulfides. Participates probably to the maturation of iron-sulfur proteins and to the regulation of the redox state of the BOLA proteins. The GRXS17-BOLA2 heterodimer binds a labile, oxygen sensitive iron-sulfur cluster. The sequence is that of Monothiol glutaredoxin-S17 from Arabidopsis thaliana (Mouse-ear cress).